Consider the following 668-residue polypeptide: Transketolase 1 (668 aa).

His26 provides a ligand contact to substrate. Thiamine diphosphate contacts are provided by residues His66 and 114–116 (GPL). Asp155 serves as a coordination point for Mg(2+). Thiamine diphosphate is bound by residues Gly156 and Asn185. Mg(2+) is bound by residues Asn185 and Ile187. Residues His261, Arg358, and Ser385 each coordinate substrate. His261 is a binding site for thiamine diphosphate. Glu413 serves as the catalytic Proton donor. Phe439 provides a ligand contact to thiamine diphosphate. Residues His463, Asp471, and Arg522 each coordinate substrate.

The protein belongs to the transketolase family. Homodimer. Mg(2+) is required as a cofactor. The cofactor is Ca(2+). It depends on Mn(2+) as a cofactor. Requires Co(2+) as cofactor. Thiamine diphosphate serves as cofactor.

The enzyme catalyses D-sedoheptulose 7-phosphate + D-glyceraldehyde 3-phosphate = aldehydo-D-ribose 5-phosphate + D-xylulose 5-phosphate. Its function is as follows. Catalyzes the transfer of a two-carbon ketol group from a ketose donor to an aldose acceptor, via a covalent intermediate with the cofactor thiamine pyrophosphate. This chain is Transketolase 1 (tktA), found in Pasteurella multocida (strain Pm70).